A 404-amino-acid chain; its full sequence is Cysteine desulfurase IscS (404 aa).

Residues 75–76 (AT), Asn155, Gln183, and 203–205 (SAH) contribute to the pyridoxal 5'-phosphate site. An N6-(pyridoxal phosphate)lysine modification is found at Lys206. Residue Thr243 coordinates pyridoxal 5'-phosphate. Cys328 acts as the Cysteine persulfide intermediate in catalysis. Residue Cys328 participates in [2Fe-2S] cluster binding.

This sequence belongs to the class-V pyridoxal-phosphate-dependent aminotransferase family. NifS/IscS subfamily. Homodimer. Forms a heterotetramer with IscU, interacts with other sulfur acceptors. The cofactor is pyridoxal 5'-phosphate.

The protein resides in the cytoplasm. The enzyme catalyses (sulfur carrier)-H + L-cysteine = (sulfur carrier)-SH + L-alanine. Its pathway is cofactor biosynthesis; iron-sulfur cluster biosynthesis. Its function is as follows. Master enzyme that delivers sulfur to a number of partners involved in Fe-S cluster assembly, tRNA modification or cofactor biosynthesis. Catalyzes the removal of elemental sulfur atoms from cysteine to produce alanine. Functions as a sulfur delivery protein for Fe-S cluster synthesis onto IscU, an Fe-S scaffold assembly protein, as well as other S acceptor proteins. The protein is Cysteine desulfurase IscS of Pseudomonas putida (strain W619).